Here is a 931-residue protein sequence, read N- to C-terminus: Isoleucine--tRNA ligase (931 aa).

Positions 58–68 match the 'HIGH' region motif; it reads PYANGHLHCGH. E559 is an L-isoleucyl-5'-AMP binding site. Residues 600 to 604 carry the 'KMSKS' region motif; it reads KLSKS. Position 603 (K603) interacts with ATP. C894, C897, C914, and C917 together coordinate Zn(2+).

The protein belongs to the class-I aminoacyl-tRNA synthetase family. IleS type 1 subfamily. Monomer. It depends on Zn(2+) as a cofactor.

Its subcellular location is the cytoplasm. The catalysed reaction is tRNA(Ile) + L-isoleucine + ATP = L-isoleucyl-tRNA(Ile) + AMP + diphosphate. In terms of biological role, catalyzes the attachment of isoleucine to tRNA(Ile). As IleRS can inadvertently accommodate and process structurally similar amino acids such as valine, to avoid such errors it has two additional distinct tRNA(Ile)-dependent editing activities. One activity is designated as 'pretransfer' editing and involves the hydrolysis of activated Val-AMP. The other activity is designated 'posttransfer' editing and involves deacylation of mischarged Val-tRNA(Ile). The polypeptide is Isoleucine--tRNA ligase (Legionella pneumophila (strain Lens)).